We begin with the raw amino-acid sequence, 154 residues long: Ribonuclease K6 (154 aa).

Positions 1–27 (MGPHLLGRSSLLLLLLGMWWSVRPLCA) are cleaved as a signal peptide. The active-site Proton acceptor is the His-42. Disulfide bonds link Cys-50–Cys-108, Cys-64–Cys-118, Cys-82–Cys-133, and Cys-89–Cys-96. Asn-59 carries an N-linked (GlcNAc...) asparagine glycan. Substrate contacts are provided by residues 65–69 (KPENT) and Lys-90. A glycan (N-linked (GlcNAc...) asparagine) is linked at Asn-104. The active-site Proton donor is the His-149.

It belongs to the pancreatic ribonuclease family. Interacts (via N-terminus) with bacterial lipopolysaccharide (LPS). As to expression, kidney (at protein level).

The protein resides in the secreted. Its subcellular location is the lysosome. It is found in the cytoplasmic granule. In terms of biological role, ribonuclease which shows a preference for the pyrimidines uridine and cytosine. Has potent antimicrobial activity against a range of Gram-positive and Gram-negative bacteria, including P.aeruginosa, A.baumanii, M.luteus, S.aureus, E.faecalis, E.faecium, S.saprophyticus and E.coli. Causes loss of bacterial membrane integrity, and also promotes agglutination of Gram-negative bacteria. Probably contributes to urinary tract sterility. Bactericidal activity is independent of RNase activity. This Bos taurus (Bovine) protein is Ribonuclease K6 (RNASE6).